Consider the following 471-residue polypeptide: tRNA-2-methylthio-N(6)-dimethylallyladenosine synthase (471 aa).

The MTTase N-terminal domain maps to 29-146; that stretch reads KKFHIKTYGC…LPELIAKVNR (118 aa). [4Fe-4S] cluster contacts are provided by Cys-38, Cys-74, Cys-109, Cys-187, Cys-191, and Cys-194. One can recognise a Radical SAM core domain in the interval 173 to 405; sequence RVPQSSAFLS…QQLLKEKQLE (233 aa). The 60-residue stretch at 408 to 467 folds into the TRAM domain; the sequence is KKMIGKTVTVLFDKKHPDKISGRTEYMQQVFSDDSNLLDKIVTMRVEDASTFTLKCTAED.

It belongs to the methylthiotransferase family. MiaB subfamily. As to quaternary structure, monomer. [4Fe-4S] cluster is required as a cofactor.

The protein localises to the cytoplasm. It catalyses the reaction N(6)-dimethylallyladenosine(37) in tRNA + (sulfur carrier)-SH + AH2 + 2 S-adenosyl-L-methionine = 2-methylsulfanyl-N(6)-dimethylallyladenosine(37) in tRNA + (sulfur carrier)-H + 5'-deoxyadenosine + L-methionine + A + S-adenosyl-L-homocysteine + 2 H(+). Catalyzes the methylthiolation of N6-(dimethylallyl)adenosine (i(6)A), leading to the formation of 2-methylthio-N6-(dimethylallyl)adenosine (ms(2)i(6)A) at position 37 in tRNAs that read codons beginning with uridine. The polypeptide is tRNA-2-methylthio-N(6)-dimethylallyladenosine synthase (Neorickettsia sennetsu (strain ATCC VR-367 / Miyayama) (Ehrlichia sennetsu)).